A 152-amino-acid polypeptide reads, in one-letter code: uncharacterized protein (152 aa).

Its subcellular location is the mitochondrion. This is an uncharacterized protein from Arabidopsis thaliana (Mouse-ear cress).